Here is a 465-residue protein sequence, read N- to C-terminus: Iron-sulfur cluster assembly SufBD family protein SERP0500 (465 aa).

It belongs to the iron-sulfur cluster assembly SufBD family.

This is Iron-sulfur cluster assembly SufBD family protein SERP0500 from Staphylococcus epidermidis (strain ATCC 35984 / DSM 28319 / BCRC 17069 / CCUG 31568 / BM 3577 / RP62A).